Reading from the N-terminus, the 490-residue chain is WD repeat-containing protein JIP5 (490 aa).

WD repeat units follow at residues 23 to 64 (KYND…ERMQ), 70 to 112 (QKKK…GSCR), 118 to 155 (PIESSVGKHLFTVGKDHVVKKANTETGKVLTKTDISKD), 157 to 196 (SSKDAVTKLCHSTTHPFLLSGTENGHVLVYDSNDLSNKFK), 242 to 284 (DQED…LMDQ), 286 to 327 (SRIK…HRVN), and 340 to 377 (GTADEVGFLDIDYEYRLLTAGMDSMKLWSAEGDDEEEE). The tract at residues 368–490 (SAEGDDEEEE…SHGIRRFDGL (123 aa)) is disordered. 2 stretches are compositionally biased toward acidic residues: residues 370 to 406 (EGDDEEEEESEGEESEESEESDEESDESSGEESEGDD) and 413 to 437 (EESDSNDEDEVESSDDEKEKEEEST). Residues 438-448 (ETDHKNIEAES) show a composition bias toward basic and acidic residues. A compositionally biased stretch (polar residues) spans 450 to 461 (KQANKRQASQPK). The segment covering 469 to 484 (KQKLKQTSKLAHSHGI) has biased composition (basic residues).

Belongs to the WD repeat WDR55 family.

It localises to the nucleus. It is found in the nucleolus. The sequence is that of WD repeat-containing protein JIP5 (JIP5) from Meyerozyma guilliermondii (strain ATCC 6260 / CBS 566 / DSM 6381 / JCM 1539 / NBRC 10279 / NRRL Y-324) (Yeast).